The following is a 384-amino-acid chain: Histidinol-phosphate aminotransferase 2 (384 aa).

At Lys-236 the chain carries N6-(pyridoxal phosphate)lysine.

Belongs to the class-II pyridoxal-phosphate-dependent aminotransferase family. Histidinol-phosphate aminotransferase subfamily. As to quaternary structure, homodimer. Requires pyridoxal 5'-phosphate as cofactor.

It carries out the reaction L-histidinol phosphate + 2-oxoglutarate = 3-(imidazol-4-yl)-2-oxopropyl phosphate + L-glutamate. Its pathway is amino-acid biosynthesis; L-histidine biosynthesis; L-histidine from 5-phospho-alpha-D-ribose 1-diphosphate: step 7/9. The protein is Histidinol-phosphate aminotransferase 2 (hisC2) of Nostoc sp. (strain PCC 7120 / SAG 25.82 / UTEX 2576).